Here is a 422-residue protein sequence, read N- to C-terminus: Histidine--tRNA ligase (422 aa).

It belongs to the class-II aminoacyl-tRNA synthetase family. As to quaternary structure, homodimer.

It is found in the cytoplasm. The catalysed reaction is tRNA(His) + L-histidine + ATP = L-histidyl-tRNA(His) + AMP + diphosphate + H(+). The chain is Histidine--tRNA ligase from Lysinibacillus sphaericus (strain C3-41).